The chain runs to 418 residues: uncharacterized protein (418 aa).

Basic and acidic residues predominate over residues Glu-282–Arg-297. Residues Glu-282 to Glu-346 are disordered. Positions Ser-304–Asn-316 are enriched in low complexity. A compositionally biased stretch (polar residues) spans Trp-322–Ser-337.

This is an uncharacterized protein from Schizosaccharomyces pombe (strain 972 / ATCC 24843) (Fission yeast).